The primary structure comprises 108 residues: Large ribosomal subunit protein bL21 (108 aa).

The protein belongs to the bacterial ribosomal protein bL21 family. As to quaternary structure, part of the 50S ribosomal subunit. Contacts protein L20.

In terms of biological role, this protein binds to 23S rRNA in the presence of protein L20. This is Large ribosomal subunit protein bL21 from Orientia tsutsugamushi (strain Ikeda) (Rickettsia tsutsugamushi).